Consider the following 267-residue polypeptide: tRNA pseudouridine synthase A (267 aa).

D53 serves as the catalytic Nucleophile. Substrate is bound at residue Y114.

This sequence belongs to the tRNA pseudouridine synthase TruA family. As to quaternary structure, homodimer.

It carries out the reaction uridine(38/39/40) in tRNA = pseudouridine(38/39/40) in tRNA. Its function is as follows. Formation of pseudouridine at positions 38, 39 and 40 in the anticodon stem and loop of transfer RNAs. The chain is tRNA pseudouridine synthase A from Chlamydia trachomatis serovar L2b (strain UCH-1/proctitis).